Consider the following 2157-residue polypeptide: Mediator of RNA polymerase II transcription subunit 12-like protein (2157 aa).

The segment at M1–Q31 is disordered. T462 carries the phosphothreonine modification. Residues E1437 to K1456 show a composition bias toward basic and acidic residues. Disordered regions lie at residues E1437–S1461, R1724–T1807, and I2040–F2157. A compositionally biased stretch (basic residues) spans T1771–S1780. 3 stretches are compositionally biased toward low complexity: residues P2063–Q2076, Q2083–A2101, and R2116–Q2136. Polar residues predominate over residues K2137–V2148.

Belongs to the Mediator complex subunit 12 family. In terms of assembly, may be a component of the Mediator complex, which is known to be composed of MED1, MED4, MED6, MED7, MED8, MED9, MED10, MED11, MED12, MED13, MED13L, MED14, MED15, MED16, MED17, MED18, MED19, MED20, MED21, MED22, MED23, MED24, MED25, MED26, MED27, MED29, MED30, MED31, CCNC, CDK8 and CDC2L6/CDK11. The MED12, MED13, CCNC and CDK8 subunits form a distinct module termed the CDK8 module. Mediator containing the CDK8 module is less active than Mediator lacking this module in supporting transcriptional activation. Individual preparations of the Mediator complex lacking one or more distinct subunits have been variously termed ARC, CRSP, DRIP, PC2, SMCC and TRAP.

Its subcellular location is the nucleus. Functionally, may be a component of the Mediator complex, a coactivator involved in the regulated transcription of nearly all RNA polymerase II-dependent genes. Mediator functions as a bridge to convey information from gene-specific regulatory proteins to the basal RNA polymerase II transcription machinery. Mediator is recruited to promoters by direct interactions with regulatory proteins and serves as a scaffold for the assembly of a functional preinitiation complex with RNA polymerase II and the general transcription factors. The chain is Mediator of RNA polymerase II transcription subunit 12-like protein (Med12l) from Mus musculus (Mouse).